The following is a 24-amino-acid chain: Ascaphin-6 (24 aa).

Expressed by the skin glands.

It is found in the secreted. In terms of biological role, antimicrobial peptide that shows higher potency against Gram-negative bacteria than against Gram-positive bacteria. Has a very week hemolytic activity. In Ascaphus truei (Coastal tailed frog), this protein is Ascaphin-6.